The following is a 470-amino-acid chain: Serine hydroxymethyltransferase, cytosolic (470 aa).

Positions 1–11 are enriched in polar residues; that stretch reads MSAYALSQSHR. Positions 1–23 are disordered; that stretch reads MSAYALSQSHRQLTEGHLKDTDP. Ser2 is subject to N-acetylserine. The segment covering 12-23 has biased composition (basic and acidic residues); sequence QLTEGHLKDTDP. Lys249 carries the N6-(pyridoxal phosphate)lysine modification.

Belongs to the SHMT family. In terms of assembly, homotetramer. It depends on pyridoxal 5'-phosphate as a cofactor.

It is found in the cytoplasm. It catalyses the reaction (6R)-5,10-methylene-5,6,7,8-tetrahydrofolate + glycine + H2O = (6S)-5,6,7,8-tetrahydrofolate + L-serine. It participates in one-carbon metabolism; tetrahydrofolate interconversion. Functionally, interconversion of serine and glycine. The polypeptide is Serine hydroxymethyltransferase, cytosolic (SHM2) (Candida albicans (strain SC5314 / ATCC MYA-2876) (Yeast)).